Here is a 388-residue protein sequence, read N- to C-terminus: L-lactate dehydrogenase (388 aa).

Residues 1-380 (MIISSSSDYR…SRDSLVREIE (380 aa)) form the FMN hydroxy acid dehydrogenase domain. Y24 serves as a coordination point for substrate. The FMN site is built by S106 and Q127. Residue Y129 coordinates substrate. T155 is a binding site for FMN. R164 is a binding site for substrate. K251 is an FMN binding site. The Proton acceptor role is filled by H275. R278 serves as a coordination point for substrate. Residue 306–330 (DSGIRSGLDVVRMLAQGADGVLLGR) coordinates FMN.

This sequence belongs to the FMN-dependent alpha-hydroxy acid dehydrogenase family. FMN serves as cofactor.

It localises to the cell inner membrane. The catalysed reaction is (S)-lactate + A = pyruvate + AH2. Catalyzes the conversion of L-lactate to pyruvate. Is coupled to the respiratory chain. This Xanthobacter autotrophicus (strain ATCC BAA-1158 / Py2) protein is L-lactate dehydrogenase.